Consider the following 331-residue polypeptide: Lactamase-like protein nscB (331 aa).

Positions 106, 108, 110, and 111 each coordinate Zn(2+). The Proton donor/acceptor role is filled by Asp-110.

This sequence belongs to the metallo-beta-lactamase superfamily. The cofactor is Zn(2+).

The protein operates within secondary metabolite biosynthesis. Lactamase-like protein; part of the gene cluster that mediates the biosynthesis of neosartoricin B, a prenylated anthracenone that probably exhibits T-cell antiproliferative activity, suggestive of a physiological role as an immunosuppressive agent. The non-reducing polyketide synthase nscA probably synthesizes and cyclizes the decaketide backbone. The hydrolase nscB then mediates the product release through hydrolysis followed by spontaneous decarboxylation. The prenyltransferase nscD catalyzes the addition of the dimethylallyl group to the aromatic C5. The FAD-dependent monooxygenase nscC is then responsible for the stereospecific hydroxylation at C2. Neosartoricin B can be converted into two additional compounds neosartoricins C and D. Neosartoricin C is a spirocyclic compound that is cyclized through the attack of C3 hydroxyl on C14, followed by dehydration. On the other hand, neosartoricin D is a further cyclized compound in which attack of C2 on C14 in neosartoricin C results in the formation of the acetal-containing dioxabicyclo-octanone ring. Both of these compounds are novel and possibly represent related metabolites of the gene cluster. In Trichophyton equinum (strain ATCC MYA-4606 / CBS 127.97) (Horse ringworm fungus), this protein is Lactamase-like protein nscB.